The sequence spans 930 residues: Isoleucine--tRNA ligase (930 aa).

The short motif at 57–67 is the 'HIGH' region element; it reads PYANGNIHVGH. Glutamate 554 contributes to the L-isoleucyl-5'-AMP binding site. Residues 595–599 carry the 'KMSKS' region motif; sequence KMSKS. Residue lysine 598 coordinates ATP. Residues cysteine 888, cysteine 891, cysteine 908, and cysteine 911 each contribute to the Zn(2+) site.

The protein belongs to the class-I aminoacyl-tRNA synthetase family. IleS type 1 subfamily. As to quaternary structure, monomer. It depends on Zn(2+) as a cofactor.

It localises to the cytoplasm. It carries out the reaction tRNA(Ile) + L-isoleucine + ATP = L-isoleucyl-tRNA(Ile) + AMP + diphosphate. Functionally, catalyzes the attachment of isoleucine to tRNA(Ile). As IleRS can inadvertently accommodate and process structurally similar amino acids such as valine, to avoid such errors it has two additional distinct tRNA(Ile)-dependent editing activities. One activity is designated as 'pretransfer' editing and involves the hydrolysis of activated Val-AMP. The other activity is designated 'posttransfer' editing and involves deacylation of mischarged Val-tRNA(Ile). The chain is Isoleucine--tRNA ligase from Streptococcus sanguinis (strain SK36).